The following is a 410-amino-acid chain: uncharacterized protein (410 aa).

Position 11–39 (11–39 (VLVIGGGPSGTALSAELAARGLDVQQLAP)) interacts with NAD(+).

It belongs to the lycopene cyclase family.

This is an uncharacterized protein from Deinococcus radiodurans (strain ATCC 13939 / DSM 20539 / JCM 16871 / CCUG 27074 / LMG 4051 / NBRC 15346 / NCIMB 9279 / VKM B-1422 / R1).